The chain runs to 453 residues: MADSSRGTYWITTFGCQMNKADSERMAGILESMGYCAGSGEDQADLVLYNTCTIRDNAEQKVYSYLGRQARRKRDNPALTLVVAGCVAQQEGESLLRRVPELDLVMGPQHANRLDTLLSQVEAGQQVVATDDHHILEDITTARRDSSLCAWVNVIYGCNERCTYCVVPSVRGQEQSRLPQAIRLEMEGLAASGYKEITLLGQNIDAYGRDLPGITPEGRRQNTLTDLLHHVHDVKGIERIRFATSHPRYFTERLIEACAELPKVCEHFHVPFQSGDDELLKAMARGYTTARYRRIVEQIRKLMPDAAISADAIVGFPGETDAQFRRTLELVDEIGFDLLNTAAYSPRPNTPAADWPDQVEEHVKVERLKELNALVERKAKACSQRYLGRVEEVLAEGINPKDNTQLMGRTRTNRLTFFPAGSHRVGDTVPVRIEQVRAFSLSGSAQAQPALVR.

The MTTase N-terminal domain occupies 7–123; it reads GTYWITTFGC…LDTLLSQVEA (117 aa). [4Fe-4S] cluster is bound by residues Cys16, Cys52, Cys86, Cys158, Cys162, and Cys165. One can recognise a Radical SAM core domain in the interval 144-381; the sequence is RDSSLCAWVN…NALVERKAKA (238 aa). Residues 384–447 enclose the TRAM domain; the sequence is QRYLGRVEEV…AFSLSGSAQA (64 aa).

This sequence belongs to the methylthiotransferase family. MiaB subfamily. As to quaternary structure, monomer. [4Fe-4S] cluster is required as a cofactor.

The protein localises to the cytoplasm. The catalysed reaction is N(6)-dimethylallyladenosine(37) in tRNA + (sulfur carrier)-SH + AH2 + 2 S-adenosyl-L-methionine = 2-methylsulfanyl-N(6)-dimethylallyladenosine(37) in tRNA + (sulfur carrier)-H + 5'-deoxyadenosine + L-methionine + A + S-adenosyl-L-homocysteine + 2 H(+). Its function is as follows. Catalyzes the methylthiolation of N6-(dimethylallyl)adenosine (i(6)A), leading to the formation of 2-methylthio-N6-(dimethylallyl)adenosine (ms(2)i(6)A) at position 37 in tRNAs that read codons beginning with uridine. In Synechococcus sp. (strain RCC307), this protein is tRNA-2-methylthio-N(6)-dimethylallyladenosine synthase.